A 63-amino-acid chain; its full sequence is uncharacterized protein (63 aa).

This is an uncharacterized protein from Homo sapiens (Human).